The chain runs to 422 residues: 5-hydroxytryptamine receptor 1A (422 aa).

The Extracellular portion of the chain corresponds to 1–38 (MDVFSFGQGNNTTASQEPFGTGGNVTSISDVTFSYQVI). Residues N10, N11, and N24 are each glycosylated (N-linked (GlcNAc...) asparagine). Residues 39 to 59 (TSLLLGTLIFCAVLGNACVVA) form a helical membrane-spanning segment. Topologically, residues 60–73 (AIALERSLQNVANY) are cytoplasmic. The helical transmembrane segment at 74-98 (LIGSLAVTDLMVSVLVLPMAALYQV) threads the bilayer. Residues 99–107 (LNKWTLGQV) are Extracellular-facing. The helical transmembrane segment at 108–132 (TCDLFIALDVLCCTSSILHLCAIAL) threads the bilayer. A disulfide bond links C109 and C187. The serotonin site is built by D116 and C120. Positions 133–135 (DRY) match the DRY motif; important for ligand-induced conformation changes motif. Over 133 to 152 (DRYWAITDPIDYVNKRTPRR) the chain is Cytoplasmic. A helical membrane pass occupies residues 153-174 (AAALISLTWLIGFLISIPPMLG). Over 175–193 (WRTPEDRSDPDACTISKDH) the chain is Extracellular. The chain crosses the membrane as a helical span at residues 194–216 (GYTIYSTFGAFYIPLLLMLVLYG). Residues 217–346 (RIFRAARFRI…LARERKTVKT (130 aa)) lie on the Cytoplasmic side of the membrane. The interval 235–261 (KKGAGTSLGTSSAPPPKKSLNGQPGSG) is disordered. 1D-myo-inositol 4-phosphate is bound by residues K345, T346, and G352. A helical transmembrane segment spans residues 347 to 370 (LGIIMGTFILCWLPFFIVALVLPF). Residues 371–378 (CESSCHMP) lie on the Extracellular side of the membrane. Residues 379 to 403 (ALLGAIINWLGYSNSLLNPVIYAYF) traverse the membrane as a helical segment. The short motif at 396 to 400 (NPVIY) is the NPxxY motif; important for ligand-induced conformation changes and signaling element. Residues F403, N404, and K405 each contribute to the 1D-myo-inositol 4-phosphate site. At 404–422 (NKDFQNAFKKIIKCKFCRR) the chain is on the cytoplasmic side.

The protein belongs to the G-protein coupled receptor 1 family. 5-hydroxytryptamine receptor subfamily. HTR1A sub-subfamily. Heterodimer; heterodimerizes with GPER1. Interacts with YIF1B. Interacts with GPR39 and GALR1. Detected in hypothalamus, mesencephalon, amygdala, medulla, thalamus, septum and hippocampus.

Its subcellular location is the cell membrane. The protein resides in the cell projection. It localises to the dendrite. With respect to regulation, G-protein coupled receptor activity is regulated by lipids: phosphatidylinositol 4-phosphate increases HTR1A-mediated activity. G-protein coupled receptor for 5-hydroxytryptamine (serotonin). Also functions as a receptor for various drugs and psychoactive substances. Ligand binding causes a conformation change that triggers signaling via guanine nucleotide-binding proteins (G proteins) and modulates the activity of downstream effectors, such as adenylate cyclase. HTR1A is coupled to G(i)/G(o) G alpha proteins and mediates inhibitory neurotransmission: signaling inhibits adenylate cyclase activity and activates a phosphatidylinositol-calcium second messenger system that regulates the release of Ca(2+) ions from intracellular stores. Beta-arrestin family members regulate signaling by mediating both receptor desensitization and resensitization processes. The sequence is that of 5-hydroxytryptamine receptor 1A from Rattus norvegicus (Rat).